Consider the following 55-residue polypeptide: Large ribosomal subunit protein bL33A (55 aa).

Belongs to the bacterial ribosomal protein bL33 family.

This Mycolicibacterium vanbaalenii (strain DSM 7251 / JCM 13017 / BCRC 16820 / KCTC 9966 / NRRL B-24157 / PYR-1) (Mycobacterium vanbaalenii) protein is Large ribosomal subunit protein bL33A.